We begin with the raw amino-acid sequence, 364 residues long: C3a anaphylatoxin chemotactic receptor (364 aa).

Over 1-50 the chain is Extracellular; sequence MGDNMDFSEHYGNFSENYVTESYGEFDLYYDPLNETSLSEQGHRSIWVLS. N-linked (GlcNAc...) asparagine glycosylation is found at Asn13 and Asn34. The helical transmembrane segment at 51 to 71 threads the bilayer; that stretch reads IVLCSIACVLGITGNAFVIWI. The Cytoplasmic segment spans residues 72-82; it reads AGVKMKRTVNT. The chain crosses the membrane as a helical span at residues 83–103; sequence IWFVNLAAADLLCCVSIPFSI. Over 104–120 the chain is Extracellular; that stretch reads ADIILNSHWPYGEAMCK. Cysteines 119 and 198 form a disulfide. The helical transmembrane segment at 121–141 threads the bilayer; it reads ILPSMVVLNMFASVFTLVLIS. At 142–159 the chain is on the cytoplasmic side; it reads LDRFALVILPVWAQNHRS. A helical transmembrane segment spans residues 160–180; it reads ITLAWLLCGLVWVLGLLLSLP. Over 181–220 the chain is Extracellular; that stretch reads SMIYREIVVHDDMNITLCIYNHLQDKTEGNQSAIKAIHVT. The helical transmembrane segment at 221-241 threads the bilayer; it reads RLILGFLIPLLVIAVCYLLIG. Residues 242 to 256 lie on the Cytoplasmic side of the membrane; sequence RRVSSGRFKSQRAFQ. The chain crosses the membrane as a helical span at residues 257–277; that stretch reads IILVVVTTFFVCWLPYHVIGL. The Extracellular segment spans residues 278-295; sequence VIEYGKEASQVMARALDP. A helical membrane pass occupies residues 296–316; it reads LAISLAYVNSCLNPVLYVFMG. Over 317-364 the chain is Cytoplasmic; it reads QDFKERVRVSLRKIFEKVFSEDVTLRSSVYSKGQSQLSRATNSSEAQV.

This sequence belongs to the G-protein coupled receptor 1 family.

It localises to the cell membrane. Its function is as follows. Receptor for the chemotactic and inflammatory peptide anaphylatoxin C3a. This receptor stimulates chemotaxis, granule enzyme release and superoxide anion production. In Oncorhynchus mykiss (Rainbow trout), this protein is C3a anaphylatoxin chemotactic receptor (c3ar1).